The chain runs to 401 residues: CLIP domain-containing serine protease B9 (401 aa).

Positions 1–26 are cleaved as a signal peptide; the sequence is MTSYNRSVAWLTVCVLLALHIGGSHQ. Positions 30–85 constitute a Clip domain; the sequence is QCTTPTRLRGRCISIYECDSILDYFKQRILTWEEREFLRKSQCTGATSGRQPFVCC. 3 cysteine pairs are disulfide-bonded: Cys31-Cys84, Cys41-Cys72, and Cys47-Cys85. Asn88 carries N-linked (GlcNAc...) asparagine glycosylation. Residues 148 to 400 enclose the Peptidase S1 domain; it reads IYGGQNADID…YMAWVRSNIK (253 aa). Cys178 and Cys194 are oxidised to a cystine. Residues His193 and Asp257 each act as charge relay system in the active site. 2 disulfides stabilise this stretch: Cys322–Cys339 and Cys349–Cys376. N-linked (GlcNAc...) asparagine glycosylation occurs at Asn330. Ser353 acts as the Charge relay system in catalysis.

Belongs to the peptidase S1 family. CLIP subfamily. As to quaternary structure, forms a covalent heterodimer with SRPN2; the interaction inhibits CLIPB9 protease activity. In terms of processing, proteolytic cleavage is necessary for activation.

It is found in the secreted. Inhibited by serpin SRPN2. Its function is as follows. Serine protease that functions in the melanization-mediated immune response. Cleaves and activates prophenoloxidase (PPO), which is required for the activation of the prophenoloxidase cascade probably following the recognition of pathogen-derived products. This is CLIP domain-containing serine protease B9 from Anopheles gambiae (African malaria mosquito).